Consider the following 119-residue polypeptide: uncharacterized protein (119 aa).

The interval 1-22 (MQGQAGKRKTDGKVPSNTEQNC) is disordered.

This is an uncharacterized protein from Saccharomyces cerevisiae (strain ATCC 204508 / S288c) (Baker's yeast).